Consider the following 92-residue polypeptide: MKKLCTALLLSLFAISFAHANETKQIVLKVKEMNCQLCAYLVNKELRNINGVISTKASIKDGLVTVVEDPNVTNQQLFDAIHKLKYTAEVVN.

The region spanning 24-89 (KQIVLKVKEM…AIHKLKYTAE (66 aa)) is the HMA domain. Residues cysteine 35 and cysteine 38 each contribute to the a metal cation site.

This is an uncharacterized protein from Haemophilus influenzae (strain ATCC 51907 / DSM 11121 / KW20 / Rd).